The chain runs to 128 residues: Cionin (128 aa).

The first 22 residues, 1 to 22 (MGSNIVIYFSIIVIVTLNVNGV), serve as a signal peptide directing secretion. Residues 23–108 (PASDLFKSVS…NQGHMQRMDR (86 aa)) constitute a propeptide that is removed on maturation. Residues Tyr110 and Tyr111 each carry the sulfotyrosine modification. At Phe116 the chain carries Phenylalanine amide. Positions 120–128 (AIEDVDYEY) are excised as a propeptide.

It belongs to the gastrin/cholecystokinin family. As to expression, expressed in both the gut and the neural ganglion.

It is found in the secreted. This Ciona intestinalis (Transparent sea squirt) protein is Cionin.